We begin with the raw amino-acid sequence, 233 residues long: Riboflavin kinase (233 aa).

Residues 1-104 (MVRDIKTFKF…YKKIFDDEGT (104 aa)) form an H-T-H motif-like region. The segment at 105–233 (IKIKGEVFSG…GDFVEVEVIL (129 aa)) is riboflavin kinase. A CDP-binding site is contributed by 114–119 (GVGEGR). Positions 143 and 145 each coordinate Mg(2+). The FMN site is built by threonine 200 and glutamate 208. CDP is bound at residue 213–216 (VKLR).

The protein belongs to the archaeal riboflavin kinase family. It depends on Mg(2+) as a cofactor.

It catalyses the reaction riboflavin + CTP = CDP + FMN + H(+). It functions in the pathway cofactor biosynthesis; FMN biosynthesis; FMN from riboflavin (CTP route): step 1/1. In terms of biological role, catalyzes the CTP-dependent phosphorylation of riboflavin (vitamin B2) to form flavin mononucleotide (FMN). This chain is Riboflavin kinase (ribK), found in Archaeoglobus fulgidus (strain ATCC 49558 / DSM 4304 / JCM 9628 / NBRC 100126 / VC-16).